We begin with the raw amino-acid sequence, 432 residues long: FLYWCH-type zinc finger-containing protein peb-1 (432 aa).

A disordered region spans residues 1 to 33 (MLGLEKPLSSDISSSSTDTSAISPISVSSMPLS). Low complexity predominate over residues 9–26 (SSDISSSSTDTSAISPIS). The segment at residues 30-188 (MPLSPDKEKK…RNKEGKPRKP (159 aa)) is a DNA-binding region (required for DNA-binding). The segment at 53 to 120 (IVTSFKGYQK…NACTKNTHNH (68 aa)) adopts an FLYWCH-type zinc-finger fold. Positions 174 to 195 (SLVSARNKEGKPRKPKSKTSTN) are disordered.

Its subcellular location is the nucleus. Functionally, putative transcription factor. Binds to specific sequence motif 5'-[TC][AGT]TGCC[GA][AT]-3' in regulatory elements of target genes such as myosin myo-2. May modulate gene expression, perhaps acting in opposition to transcription factor pha-4. Involved in morphogenesis, perhaps especially in formation of the pharynx. Plays roles in molting, feeding and morphology. In Caenorhabditis briggsae, this protein is FLYWCH-type zinc finger-containing protein peb-1.